The sequence spans 84 residues: UPF0473 protein CLD_2004 (84 aa).

It belongs to the UPF0473 family.

The polypeptide is UPF0473 protein CLD_2004 (Clostridium botulinum (strain Okra / Type B1)).